Consider the following 445-residue polypeptide: Protein phosphatase 2C 53 (445 aa).

Residues 124-435 (LWGLESICGR…DNITVVVIDL (312 aa)) enclose the PPM-type phosphatase domain. 4 residues coordinate Mn(2+): aspartate 180, glycine 181, aspartate 362, and aspartate 426.

Belongs to the PP2C family. Interacts with PYL10, SAPK8 and SAPK10. Binding to PYL10 is dependent on the presence of abscisic acid (ABA). Interacts with PYL3, PYL5, PYL9 and PYL10. Binding to PYL9 and PYL10 is dependent on the presence of ABA. Mg(2+) is required as a cofactor. The cofactor is Mn(2+). As to expression, expressed in leaf blades, leaf sheaths and lamina joints. Expressed at low levels in roots, stems, flowers and panicles.

Its subcellular location is the cytoplasm. The protein resides in the cytosol. It is found in the nucleus. The enzyme catalyses O-phospho-L-seryl-[protein] + H2O = L-seryl-[protein] + phosphate. It carries out the reaction O-phospho-L-threonyl-[protein] + H2O = L-threonyl-[protein] + phosphate. With respect to regulation, repressed by abscisic acid-bound PYL1. Functionally, protein phosphatase that acts as a negative regulator of abscisic acid (ABA) signaling. Involved in the regulation of root architecture development and drought resistance. Can dephosphorylate SAPK8 and SAPK10 in vitro. Together with PYL10, SAPK8 and SAPK10, may form an ABA signaling module involved in stress response. This chain is Protein phosphatase 2C 53, found in Oryza sativa subsp. japonica (Rice).